The chain runs to 193 residues: Urease accessory protein UreE (193 aa).

A disordered region spans residues 138–193 (RGAYHSHGAHSHDQGHAAHDHGNEHKHDHGHDHVHGPGCDHDHDHDHGHHHDHKHD). Over residues 147-193 (HSHDQGHAAHDHGNEHKHDHGHDHVHGPGCDHDHDHDHGHHHDHKHD) the composition is skewed to basic and acidic residues.

The protein belongs to the UreE family.

It localises to the cytoplasm. Functionally, involved in urease metallocenter assembly. Binds nickel. Probably functions as a nickel donor during metallocenter assembly. This Rhizobium leguminosarum bv. trifolii (strain WSM2304) protein is Urease accessory protein UreE.